A 317-amino-acid polypeptide reads, in one-letter code: Carbonic anhydrase 6 (317 aa).

An N-terminal signal peptide occupies residues methionine 1–alanine 17. Residues serine 19–phenylalanine 277 enclose the Alpha-carbonic anhydrase domain. Cysteine 41 and cysteine 223 are oxidised to a cystine. Residue histidine 84 is the Proton donor/acceptor of the active site. Positions 110, 112, and 137 each coordinate Zn(2+). Threonine 219–threonine 220 lines the substrate pocket. An N-linked (GlcNAc...) asparagine glycan is attached at asparagine 255.

This sequence belongs to the alpha-carbonic anhydrase family. The cofactor is Zn(2+). As to expression, major constituent of saliva.

Its subcellular location is the secreted. The enzyme catalyses hydrogencarbonate + H(+) = CO2 + H2O. Reversible hydration of carbon dioxide. Its role in saliva is unknown. This chain is Carbonic anhydrase 6 (Ca6), found in Mus musculus (Mouse).